The following is a 334-amino-acid chain: S-adenosylmethionine decarboxylase proenzyme (334 aa).

Phe7 serves as a coordination point for substrate. Residues Glu8 and Glu11 contribute to the active site. A substrate-binding site is contributed by Glu67. Ser68 acts as the Schiff-base intermediate with substrate; via pyruvic acid in catalysis. Ser68 bears the Pyruvic acid (Ser); by autocatalysis mark. Cys82 (proton donor; for catalytic activity) is an active-site residue. Phe223 is a binding site for substrate. Catalysis depends on proton acceptor; for processing activity residues Ser229 and His243. Position 247 (Glu247) interacts with substrate. The residue at position 298 (Ser298) is a Phosphoserine.

Belongs to the eukaryotic AdoMetDC family. As to quaternary structure, heterotetramer of two alpha and two beta chains. The cofactor is pyruvate. Post-translationally, is synthesized initially as an inactive proenzyme. Formation of the active enzyme involves a self-maturation process in which the active site pyruvoyl group is generated from an internal serine residue via an autocatalytic post-translational modification. Two non-identical subunits are generated from the proenzyme in this reaction, and the pyruvate is formed at the N-terminus of the alpha chain, which is derived from the carboxyl end of the proenzyme. The post-translation cleavage follows an unusual pathway, termed non-hydrolytic serinolysis, in which the side chain hydroxyl group of the serine supplies its oxygen atom to form the C-terminus of the beta chain, while the remainder of the serine residue undergoes an oxidative deamination to produce ammonia and the pyruvoyl group blocking the N-terminus of the alpha chain.

The enzyme catalyses S-adenosyl-L-methionine + H(+) = S-adenosyl 3-(methylsulfanyl)propylamine + CO2. Its pathway is amine and polyamine biosynthesis; S-adenosylmethioninamine biosynthesis; S-adenosylmethioninamine from S-adenosyl-L-methionine: step 1/1. In terms of biological role, essential for biosynthesis of the polyamines spermidine and spermine. Promotes maintenance and self-renewal of embryonic stem cells, by maintaining spermine levels. This chain is S-adenosylmethionine decarboxylase proenzyme (AMD1), found in Bos taurus (Bovine).